Consider the following 1007-residue polypeptide: MSSPPQGSSLASPVQAAAVTGDKTTLLKLIASSPEVIDQEDQLGRTPLMYSVLGDRRSCAEALLKHGAQVNHPDRSGRTALHLAAQTGNHRLLKLLLSRKADCTHRDLRDITAVHLSTRHQDTRCLALILKYTPPGQVDAQDQRKQTALHWSAYYNRPRHVRLLVRHGSNIGIPDTEGKIPLHWAAGHKDPEAALTVRCLLEAAPTESLLNWQDYEGRTPLHLAVGDGNQEVVRLLTSYRGCNVAPYDNLFRTPLHWAALLGYTPIAHLLLETNNSPNIPSDSQGATPLHYAAQGNCPDTVRVLLSHISVRDEADLEGRTAFMWAAGKGSDEVVRTMLELDPELEVNRTDKYGGTALHAASLSGQITTVRILLENRVQVDAVDVMKHTALFRACEMGHREVISTLIKGGAKVHLVDKDGRSPLHWAALGGNANVCQILIENNINPDAQDYEGRTPLQCAAYGGYIGCMEVLMENKADPNIQDKNGRTALHWSCNNGYLDAVKLLLGYSAFPNQMENTEERYTPLDYALLGGHQEVIQFMLEHGALSIAAIQDIAASKIQAVYKGHKVRRAFQERKNLLMKHEQLRKGAAAKKREGENRQKGKVGQTEGKQKDENHVMRQDKSNEHIQNEVMREWYGEETGRAEDRKEEHQEENQNIEPKQLKHSKHMEQNSKSIAKNQKRAGHIQSSPIEHVHTNSIQTRMSPSRTSISHSSPLGNETPKNMYWDDNPTQNNTQPRRTSRPQIESPNIIVHRIEDLVQKESRRKSHREERKGSHRQRASSHHRLQASERETAGSVIHGEVEFKKKETKKGRRTAAGTSKIRASGEAGRLSQSEKEFSSTGIQGRVDCITSPESCETPSRVCRERKMISAKSGQRPLTETQSPEKACQGSSALKPSLTSHTKQTAIASKCLDSTPSYIGFGEAIKPLTPMGILREGSFSSKWQNIDIELIPLEARLQLVEKEKARKQLFQRKKHAATVIQKAWRTYCIRKSSRKTRHSHLRNNPRAMV.

16 ANK repeats span residues serine 9–glutamine 39, leucine 43–histidine 72, serine 76–histidine 105, arginine 109–alanine 140, arginine 144–isoleucine 173, glutamate 177–leucine 209, glutamate 216–proline 246, leucine 250–isoleucine 279, glutamine 284–glutamate 313, glutamate 317–valine 346, tyrosine 352–alanine 381, methionine 385–leucine 414, aspartate 418–alanine 447, glutamate 451–isoleucine 480, asparagine 484–glutamine 513, and glutamate 519–alanine 549. The short motif at arginine 486–asparagine 494 is the D-box 1 element. The IQ 1 domain occupies glutamine 551 to lysine 580. Composition is skewed to basic and acidic residues over residues arginine 585 to glutamine 599 and glycine 608 to glutamate 652. Disordered regions lie at residues arginine 585–serine 837 and serine 868–lysine 893. Over residues isoleucine 684 to methionine 701 the composition is skewed to polar residues. Low complexity predominate over residues serine 702–serine 712. Polar residues predominate over residues asparagine 727–serine 745. Basic and acidic residues predominate over residues histidine 751–lysine 771. Positions glycine 772–leucine 784 are enriched in basic residues. The segment covering lysine 870–lysine 893 has biased composition (polar residues). The D-box 2 signature appears at arginine 964–lysine 972. The IQ 2 domain occupies lysine 971–arginine 1000.

In terms of assembly, interacts with apc2. Binds calmodulin.

The protein resides in the cytoplasm. Its subcellular location is the cytoskeleton. Required for normal renal development and establishment of left-right axis. Probably acts as a molecular switch between different Wnt signaling pathways. Inhibits the canonical Wnt pathway by targeting cytoplasmic disheveled for degradation by the ubiquitin-proteasome. This suggests that it is required in renal development to oppose the repression of terminal differentiation of tubular epithelial cells by Wnt signaling. Plays a central role in convergent extension movements in gastrulating embryos, a processus regulated by Wnt signaling. The chain is Inversin-A (invs-a) from Xenopus laevis (African clawed frog).